A 162-amino-acid polypeptide reads, in one-letter code: NADH-quinone oxidoreductase subunit I (162 aa).

4Fe-4S ferredoxin-type domains follow at residues 54 to 83 (RRYE…IESE) and 93 to 122 (TRYD…ETQI). Residues Cys-63, Cys-66, Cys-69, Cys-73, Cys-102, Cys-105, Cys-108, and Cys-112 each contribute to the [4Fe-4S] cluster site.

The protein belongs to the complex I 23 kDa subunit family. NDH-1 is composed of 14 different subunits. Subunits NuoA, H, J, K, L, M, N constitute the membrane sector of the complex. [4Fe-4S] cluster serves as cofactor.

The protein resides in the cell inner membrane. The catalysed reaction is a quinone + NADH + 5 H(+)(in) = a quinol + NAD(+) + 4 H(+)(out). In terms of biological role, NDH-1 shuttles electrons from NADH, via FMN and iron-sulfur (Fe-S) centers, to quinones in the respiratory chain. The immediate electron acceptor for the enzyme in this species is believed to be ubiquinone. Couples the redox reaction to proton translocation (for every two electrons transferred, four hydrogen ions are translocated across the cytoplasmic membrane), and thus conserves the redox energy in a proton gradient. The protein is NADH-quinone oxidoreductase subunit I of Burkholderia pseudomallei (strain 668).